Reading from the N-terminus, the 123-residue chain is Large ribosomal subunit protein uL14 (123 aa).

This sequence belongs to the universal ribosomal protein uL14 family. As to quaternary structure, part of the 50S ribosomal subunit. Forms a cluster with proteins L3 and L19. In the 70S ribosome, L14 and L19 interact and together make contacts with the 16S rRNA in bridges B5 and B8.

Binds to 23S rRNA. Forms part of two intersubunit bridges in the 70S ribosome. The sequence is that of Large ribosomal subunit protein uL14 from Actinobacillus succinogenes (strain ATCC 55618 / DSM 22257 / CCUG 43843 / 130Z).